The chain runs to 1118 residues: Phytochrome 1 (1118 aa).

Residues methionine 1–serine 10 are compositionally biased toward low complexity. Residues methionine 1 to alanine 23 form a disordered region. Residues aspartate 212–valine 391 form the GAF domain. Residue cysteine 317 coordinates phytochromobilin. PAS domains are found at residues valine 606–glutamate 677 and aspartate 740–methionine 811. The 224-residue stretch at tyrosine 887–histidine 1110 folds into the Histidine kinase domain.

Belongs to the phytochrome family. In terms of assembly, homodimer. In terms of processing, contains one covalently linked phytochromobilin chromophore.

Its function is as follows. Regulatory photoreceptor which exists in two forms that are reversibly interconvertible by light: the Pr form that absorbs maximally in the red region of the spectrum and the Pfr form that absorbs maximally in the far-red region. Photoconversion of Pr to Pfr induces an array of morphogenic responses, whereas reconversion of Pfr to Pr cancels the induction of those responses. Pfr controls the expression of a number of nuclear genes including those encoding the small subunit of ribulose-bisphosphate carboxylase, chlorophyll A/B binding protein, protochlorophyllide reductase, rRNA, etc. It also controls the expression of its own gene(s) in a negative feedback fashion. This Adiantum capillus-veneris (Maidenhair fern) protein is Phytochrome 1 (PHY1).